The primary structure comprises 1258 residues: Splicing factor, arginine/serine-rich 19 (1258 aa).

6 disordered regions span residues 1–32 (MEEE…LSPS), 159–345 (KTVS…PRRR), 370–398 (GGPA…EEEP), 410–1034 (PRQP…PPPM), 1114–1154 (GSLP…DKYL), and 1223–1258 (FRKH…LPPL). Residues 7–27 (SRGKTEESGEDRGDGPPDRDP) are compositionally biased toward basic and acidic residues. Positions 193-207 (SSASSSPSPSPSSSS) are enriched in low complexity. Residues 208 to 223 (PSPPPPPPPPPPPALP) are compositionally biased toward pro residues. The segment covering 228-237 (DIYDPFHPTD) has biased composition (basic and acidic residues). Position 241 is a phosphoserine (Ser-241). Residues 256–266 (TGSNPSSSAGT) show a composition bias toward polar residues. Over residues 269–283 (PEEEEEEEEEEEEEG) the composition is skewed to acidic residues. Thr-329 carries the phosphothreonine modification. The segment covering 374 to 383 (LPLPPLPPTD) has biased composition (pro residues). The segment covering 384–395 (PEIEEGEIVQPE) has biased composition (acidic residues). Residues 414–426 (PASVATLASVAAP) show a composition bias toward low complexity. Residues Ser-444 and Ser-449 each carry the phosphoserine modification. A compositionally biased stretch (basic residues) spans 480 to 491 (KILTQRRERYRQ). Phosphoserine occurs at positions 493, 495, 512, and 520. Composition is skewed to basic residues over residues 540–555 (TARR…RSRS) and 562–579 (RGSH…RRRS). Phosphoserine occurs at positions 579 and 581. Residues 594–613 (RERHRGKRREGGKKKKKRSR) are compositionally biased toward basic residues. Over residues 614–625 (SRAEKRSGDLEK) the composition is skewed to basic and acidic residues. Thr-665 carries the post-translational modification Phosphothreonine. Ser-678 and Ser-684 each carry phosphoserine. Tyr-691 carries the post-translational modification Phosphotyrosine. Phosphoserine occurs at positions 693 and 697. Basic and acidic residues-rich tracts occupy residues 698 to 711 (ADER…DRRR) and 721 to 743 (SREK…DRSS). Composition is skewed to low complexity over residues 752–777 (SAPG…SCSS) and 795–806 (SSTTPAKDSSSS). Lys-814 participates in a covalent cross-link: Glycyl lysine isopeptide (Lys-Gly) (interchain with G-Cter in SUMO2). A compositionally biased stretch (basic and acidic residues) spans 815–833 (FSRDRESRSPFLKPDERAP). 2 positions are modified to phosphoserine: Ser-821 and Ser-823. A compositionally biased stretch (basic residues) spans 845 to 877 (KPKKTKAKAKAGAKKAKGTKGKTKPSKTRKKVR). 4 positions are modified to phosphoserine: Ser-878, Ser-885, Ser-912, and Ser-914. Residues 924 to 937 (STPPPKVAPPPPAL) show a composition bias toward pro residues. Phosphothreonine occurs at positions 925 and 938. Positions 940–949 (DSQTVDSSCK) are enriched in polar residues. Ser-941 bears the Phosphoserine mark. At Thr-950 the chain carries Phosphothreonine. A compositionally biased stretch (acidic residues) spans 971–986 (EEEEEEEEEEEEEEEQ). The span at 987–1019 (QPATTTATSTAAAAPSTAPSAGSTAGDSGAEDG) shows a compositional bias: low complexity. Positions 1133-1258 (PASDKREGSS…GGPGLPLPPL (126 aa)) are necessary for interaction with the CTD domain of POLR2A. The segment covering 1135–1154 (SDKREGSSSSEGRGDTDKYL) has biased composition (basic and acidic residues). A compositionally biased stretch (pro residues) spans 1246-1258 (PDKGGPGLPLPPL).

It belongs to the splicing factor SR family. In terms of assembly, interacts with POLR2A.

The protein localises to the nucleus. May function in pre-mRNA splicing. In Rattus norvegicus (Rat), this protein is Splicing factor, arginine/serine-rich 19 (Scaf1).